We begin with the raw amino-acid sequence, 200 residues long: Dephospho-CoA kinase (200 aa).

Residues 3 to 200 (VIGLTGGIGS…KKYMTLAQGS (198 aa)) enclose the DPCK domain. Position 11–16 (11–16 (GSGKTS)) interacts with ATP.

Belongs to the CoaE family.

The protein localises to the cytoplasm. It carries out the reaction 3'-dephospho-CoA + ATP = ADP + CoA + H(+). Its pathway is cofactor biosynthesis; coenzyme A biosynthesis; CoA from (R)-pantothenate: step 5/5. Catalyzes the phosphorylation of the 3'-hydroxyl group of dephosphocoenzyme A to form coenzyme A. This chain is Dephospho-CoA kinase, found in Nitrosospira multiformis (strain ATCC 25196 / NCIMB 11849 / C 71).